A 124-amino-acid polypeptide reads, in one-letter code: Replication restart protein PriB (124 aa).

One can recognise an SSB domain in the interval 12 to 112 (IDNCLTLTGI…LHTEQIEFID (101 aa)).

It belongs to the PriB family. In terms of assembly, homodimer. Interacts with PriA and DnaT. Component of the replication restart primosome. Primosome assembly occurs via a 'hand-off' mechanism. PriA binds to replication forks, subsequently PriB then DnaT bind; DnaT then displaces ssDNA to generate the helicase loading substrate.

In terms of biological role, involved in the restart of stalled replication forks, which reloads the replicative helicase on sites other than the origin of replication; the PriA-PriB pathway is the major replication restart pathway. During primosome assembly it facilitates complex formation between PriA and DnaT on DNA; stabilizes PriA on DNA. Stimulates the DNA unwinding activity of PriA helicase. The chain is Replication restart protein PriB from Haemophilus ducreyi (strain 35000HP / ATCC 700724).